Here is a 490-residue protein sequence, read N- to C-terminus: MTSKSSPLIFERSREGRYAYSLPKSDIKTNSVESLLDDKFIRKNKAEFPEVAELDLVRHYTELSNKNFGVDNGFYPLGSCTMKYNPKINEKVARIPGFSESHPLQDEDQVQGSLEIIYSLQEELKEITGMDEVTLQPAAGAHGEWTALMIFKAYHENNGEGHRDEVIVPDSAHGTNPASASFAGFKSVTVKSNERGEVDIDDLKRVVNENTAAIMLTNPNTLGIFEKNIMEIREIVHNAGGLLYYDGANLNAIMDKVRPGDMGFDAVHLNLHKTFTGPHGGGGPGSGPVGVVKELASYLPKPMVIKDGDKFKYDNDIKNSIGRVKPFYGNFGIYLRAYTYIRTMGATGLKEVSEAAVLNANYIKARLSEHFEIPYKQYCKHEFVLSGVRQKEFGVRTLDMAKRLLDFGVHPPTIYFPLNVEEGMMIEPTETESKETLDYFIDTLISIAEEAKNDPDKVLEAPHTTVIDRLDEATAARKPILKFENLKQEK.

The residue at position 273 (K273) is an N6-(pyridoxal phosphate)lysine.

This sequence belongs to the GcvP family. C-terminal subunit subfamily. As to quaternary structure, the glycine cleavage system is composed of four proteins: P, T, L and H. In this organism, the P 'protein' is a heterodimer of two subunits. Pyridoxal 5'-phosphate serves as cofactor.

The catalysed reaction is N(6)-[(R)-lipoyl]-L-lysyl-[glycine-cleavage complex H protein] + glycine + H(+) = N(6)-[(R)-S(8)-aminomethyldihydrolipoyl]-L-lysyl-[glycine-cleavage complex H protein] + CO2. In terms of biological role, the glycine cleavage system catalyzes the degradation of glycine. The P protein binds the alpha-amino group of glycine through its pyridoxal phosphate cofactor; CO(2) is released and the remaining methylamine moiety is then transferred to the lipoamide cofactor of the H protein. The protein is Probable glycine dehydrogenase (decarboxylating) subunit 2 of Staphylococcus aureus (strain Mu50 / ATCC 700699).